Here is a 355-residue protein sequence, read N- to C-terminus: Peptide chain release factor 1 (355 aa).

Gln-233 bears the N5-methylglutamine mark. The span at Glu-283 to Lys-293 shows a compositional bias: basic and acidic residues. The tract at residues Glu-283–Arg-304 is disordered.

The protein belongs to the prokaryotic/mitochondrial release factor family. Methylated by PrmC. Methylation increases the termination efficiency of RF1.

It localises to the cytoplasm. In terms of biological role, peptide chain release factor 1 directs the termination of translation in response to the peptide chain termination codons UAG and UAA. This is Peptide chain release factor 1 from Finegoldia magna (strain ATCC 29328 / DSM 20472 / WAL 2508) (Peptostreptococcus magnus).